A 92-amino-acid polypeptide reads, in one-letter code: C-C motif chemokine 4-like (92 aa).

A signal peptide spans M1–S23. 2 cysteine pairs are disulfide-bonded: C34–C58 and C35–C74.

It belongs to the intercrine beta (chemokine CC) family. As to quaternary structure, interacts with CCR5. Detected in B-cells.

It localises to the secreted. Chemokine that induces chemotaxis of cells expressing CCR5 or CCR1. Inhibits HIV replication in peripheral blood monocytes that express CCR5. This chain is C-C motif chemokine 4-like (CCL4L1), found in Homo sapiens (Human).